The following is a 272-amino-acid chain: Peptidoglycolipid exporter Gap (272 aa).

The next 6 membrane-spanning stretches (helical) occupy residues 5-25 (ILGL…ILLV), 36-56 (VVFW…PLFV), 79-99 (IEPF…VIAL), 171-191 (LWVA…VLLV), 206-226 (IIAV…TLLS), and 252-272 (ILLV…LGVI).

This sequence belongs to the peptidoglycolipid addressing protein (GAP) (TC 2.A.116) family.

It is found in the cell inner membrane. Its function is as follows. Required for the transport of peptidoglycolipids (GPLs) to the cell surface. In Mycolicibacterium smegmatis (strain ATCC 700084 / mc(2)155) (Mycobacterium smegmatis), this protein is Peptidoglycolipid exporter Gap.